The primary structure comprises 233 residues: Leucyl/phenylalanyl-tRNA--protein transferase (233 aa).

Belongs to the L/F-transferase family.

It localises to the cytoplasm. The enzyme catalyses N-terminal L-lysyl-[protein] + L-leucyl-tRNA(Leu) = N-terminal L-leucyl-L-lysyl-[protein] + tRNA(Leu) + H(+). The catalysed reaction is N-terminal L-arginyl-[protein] + L-leucyl-tRNA(Leu) = N-terminal L-leucyl-L-arginyl-[protein] + tRNA(Leu) + H(+). It catalyses the reaction L-phenylalanyl-tRNA(Phe) + an N-terminal L-alpha-aminoacyl-[protein] = an N-terminal L-phenylalanyl-L-alpha-aminoacyl-[protein] + tRNA(Phe). In terms of biological role, functions in the N-end rule pathway of protein degradation where it conjugates Leu, Phe and, less efficiently, Met from aminoacyl-tRNAs to the N-termini of proteins containing an N-terminal arginine or lysine. In Anaeromyxobacter dehalogenans (strain 2CP-1 / ATCC BAA-258), this protein is Leucyl/phenylalanyl-tRNA--protein transferase.